Here is a 468-residue protein sequence, read N- to C-terminus: 6-phospho-beta-galactosidase (468 aa).

D-galactose 6-phosphate is bound by residues glutamine 19, histidine 116, asparagine 159, glutamate 160, and asparagine 297. Glutamate 160 acts as the Proton donor in catalysis. Glutamate 375 serves as the catalytic Nucleophile. The D-galactose 6-phosphate site is built by serine 428, tryptophan 429, lysine 435, and tyrosine 437.

It belongs to the glycosyl hydrolase 1 family.

The enzyme catalyses a 6-phospho-beta-D-galactoside + H2O = D-galactose 6-phosphate + an alcohol. It participates in carbohydrate metabolism; lactose degradation; D-galactose 6-phosphate and beta-D-glucose from lactose 6-phosphate: step 1/1. The polypeptide is 6-phospho-beta-galactosidase (Streptococcus mutans serotype c (strain ATCC 700610 / UA159)).